We begin with the raw amino-acid sequence, 346 residues long: Phosphoribosylformylglycinamidine cyclo-ligase (346 aa).

It belongs to the AIR synthase family.

It localises to the cytoplasm. The catalysed reaction is 2-formamido-N(1)-(5-O-phospho-beta-D-ribosyl)acetamidine + ATP = 5-amino-1-(5-phospho-beta-D-ribosyl)imidazole + ADP + phosphate + H(+). Its pathway is purine metabolism; IMP biosynthesis via de novo pathway; 5-amino-1-(5-phospho-D-ribosyl)imidazole from N(2)-formyl-N(1)-(5-phospho-D-ribosyl)glycinamide: step 2/2. The sequence is that of Phosphoribosylformylglycinamidine cyclo-ligase from Bacillus cereus (strain AH187).